Reading from the N-terminus, the 359-residue chain is NAC transcription factor 47 (359 aa).

One can recognise an NAC domain in the interval 10–186 (LPPGFRFHPT…DWVLCRIYKK (177 aa)). The DNA-binding element occupies 112-192 (IGIKKALVFY…IYKKSHASLS (81 aa)). 2 disordered regions span residues 147–166 (KRIN…FGDR) and 200–226 (TSNQ…LQND). Residues 148–165 (RINSSRSGGSEVNNNFGD) are compositionally biased toward polar residues.

The protein localises to the nucleus. Transcription factor that binds to the promoter of ACO5, an ACC oxidase involved in ethylene biosynthesis. Mediates waterlogging-induced hyponastic leaf movement, and cell expansion in abaxial cells of the basal petiole region, by directly regulating the expression of ACO5. Required for normal seed development and morphology. This is NAC transcription factor 47 from Arabidopsis thaliana (Mouse-ear cress).